The following is a 274-amino-acid chain: Energy-coupling factor transporter ATP-binding protein EcfA1 (274 aa).

One can recognise an ABC transporter domain in the interval 11 to 245 (IELKNVKFKY…ERVIEIAKID (235 aa)). 45–52 (GHNGSGKS) lines the ATP pocket.

Belongs to the ABC transporter superfamily. Energy-coupling factor EcfA family. Forms a stable energy-coupling factor (ECF) transporter complex composed of 2 membrane-embedded substrate-binding proteins (S component), 2 ATP-binding proteins (A component) and 2 transmembrane proteins (T component).

It localises to the cell membrane. In terms of biological role, ATP-binding (A) component of a common energy-coupling factor (ECF) ABC-transporter complex. Unlike classic ABC transporters this ECF transporter provides the energy necessary to transport a number of different substrates. The sequence is that of Energy-coupling factor transporter ATP-binding protein EcfA1 from Mycoplasma mobile (strain ATCC 43663 / 163K / NCTC 11711) (Mesomycoplasma mobile).